A 485-amino-acid chain; its full sequence is Homeobox protein unplugged (485 aa).

Disordered regions lie at residues 1–65 (MERP…QEQE), 114–157 (PAGH…DTRF), and 212–325 (GMAQ…RRTA). Residues 54 to 64 (RDQEQEAEQEQ) are compositionally biased toward acidic residues. Low complexity predominate over residues 114–128 (PAGHPAAQQPQAQAQ). Polar residues-rich tracts occupy residues 223-234 (QAHSSPAKSGSH) and 254-267 (DSCS…SPRN). Residues 284–293 (DSEDCSDDEG) are compositionally biased toward acidic residues. Residues 308–317 (SQGNGSSSNS) are compositionally biased toward low complexity. Residues 319–378 (SRRRRTAFTSEQLLELEREFHAKKYLSLTERSQIATSLKLSEVQVKIWFQNRRAKWKRVK) constitute a DNA-binding region (homeobox).

As to expression, expressed in the neuroectodermal and mesectodermal cells at the ventral midline of stage 8 embryos, Subsequently, expression domains in the CNS widen and have their most anterior border in the posterior deutocerebrum. Oc/otd and unpg are mutual repressors at the interface of their brain-specific expression domains. Expression fades during germ band retraction and is then restricted to subset of cells by stage 14. Expressed in the founder cells of the cerebral branch within the first tracheal metamere. Outside the CNS, expression is seen in two clusters of ectodermal cells located laterally within the labial and first thoracic segments of stage 9 embryos. By stage 13, the expression is detected in a few cells close to the dorsal midline of the embryos.

It localises to the nucleus. Its function is as follows. Plays a regulatory role in neural branching of the tracheae: segment-specific aspects of these neural branching patterns appear to be generated by homeotic regulation of expression. May have a role with oc/otd in the postembryonic development of the brain. This chain is Homeobox protein unplugged, found in Drosophila melanogaster (Fruit fly).